The primary structure comprises 447 residues: Tubulin beta chain (447 aa).

GTP is bound by residues Q11, E69, S138, G142, T143, G144, N204, and N226. E69 contacts Mg(2+). The tract at residues 421–447 is disordered; it reads EYQQYQDASISEGEEEYEEEAPMEPEE. The span at 432–447 shows a compositional bias: acidic residues; that stretch reads EGEEEYEEEAPMEPEE.

It belongs to the tubulin family. In terms of assembly, dimer of alpha and beta chains. A typical microtubule is a hollow water-filled tube with an outer diameter of 25 nm and an inner diameter of 15 nM. Alpha-beta heterodimers associate head-to-tail to form protofilaments running lengthwise along the microtubule wall with the beta-tubulin subunit facing the microtubule plus end conferring a structural polarity. Microtubules usually have 13 protofilaments but different protofilament numbers can be found in some organisms and specialized cells. It depends on Mg(2+) as a cofactor.

It is found in the cytoplasm. The protein localises to the cytoskeleton. In terms of biological role, tubulin is the major constituent of microtubules, a cylinder consisting of laterally associated linear protofilaments composed of alpha- and beta-tubulin heterodimers. Microtubules grow by the addition of GTP-tubulin dimers to the microtubule end, where a stabilizing cap forms. Below the cap, tubulin dimers are in GDP-bound state, owing to GTPase activity of alpha-tubulin. This is Tubulin beta chain from Rhynchosporium secalis (Barley scald fungus).